A 117-amino-acid polypeptide reads, in one-letter code: MDLEELQKIIQEEQIRCEREIAEAAEARNSSNSLIVVDEYSKESEDVLENGLEHVQSNEFTESEDYKSIERSLAVTEAVMARFEKEMGSLRDQMNFFHQILDNDNLDGFLTGSSKPC.

It localises to the cytoplasm. Its subcellular location is the nucleus. This is an uncharacterized protein from Schizosaccharomyces pombe (strain 972 / ATCC 24843) (Fission yeast).